The sequence spans 282 residues: Acetylglutamate kinase (282 aa).

Substrate is bound by residues Gly-62 to Gly-63, Arg-84, and Asn-178.

This sequence belongs to the acetylglutamate kinase family. ArgB subfamily.

The protein resides in the cytoplasm. It carries out the reaction N-acetyl-L-glutamate + ATP = N-acetyl-L-glutamyl 5-phosphate + ADP. It participates in amino-acid biosynthesis; L-arginine biosynthesis; N(2)-acetyl-L-ornithine from L-glutamate: step 2/4. In terms of biological role, catalyzes the ATP-dependent phosphorylation of N-acetyl-L-glutamate. This is Acetylglutamate kinase from Kosmotoga olearia (strain ATCC BAA-1733 / DSM 21960 / TBF 19.5.1).